The sequence spans 564 residues: R-linalool synthase (564 aa).

Mg(2+) contacts are provided by aspartate 320, aspartate 324, aspartate 464, threonine 468, and glutamate 472. The short motif at 320–324 (DDVYD) is the DDXXD motif element.

Belongs to the terpene synthase family. It depends on Mg(2+) as a cofactor. Mn(2+) is required as a cofactor.

It catalyses the reaction (2E)-geranyl diphosphate + H2O = (R)-linalool + diphosphate. In terms of biological role, specifically catalyzes production of (R)-(-)-linalool, the main component of lavender essential oil. This Lavandula angustifolia (Lavender) protein is R-linalool synthase.